Here is a 201-residue protein sequence, read N- to C-terminus: Potassium-transporting ATPase KdpC subunit (201 aa).

A helical transmembrane segment spans residues 17–37 (LLTGLAYPLAMTGLAGILFPV).

This sequence belongs to the KdpC family. As to quaternary structure, the system is composed of three essential subunits: KdpA, KdpB and KdpC.

The protein localises to the cell inner membrane. Part of the high-affinity ATP-driven potassium transport (or Kdp) system, which catalyzes the hydrolysis of ATP coupled with the electrogenic transport of potassium into the cytoplasm. This subunit acts as a catalytic chaperone that increases the ATP-binding affinity of the ATP-hydrolyzing subunit KdpB by the formation of a transient KdpB/KdpC/ATP ternary complex. This chain is Potassium-transporting ATPase KdpC subunit, found in Methylobacterium nodulans (strain LMG 21967 / CNCM I-2342 / ORS 2060).